The chain runs to 452 residues: MAGYLRAVSSLCRASGSTRTWAPAALNVPSWPEQPRRHYAEKRIKVEKPVVEMDGDEMTRIIWQFIKEKLILPHVDVQLKYFDLGLPNRDQTNDQVTIDSALATQKYSVAVKCATITPDEARVEEFKLKKMWKSPNGTIRNILGGTVFREPIICKNIPRLVPGWTKPITIGRHAHGDQYKATDFVVDRAGMFKLVFTPKDGSGAKEWEVYNFPAGGVGMGMYNTDESISGFAHSCFQYSIQKKWPLYLSTKNTIMKAYDGRFKDIFQEIFDKHYKTDFDKNKIWYEHRLIDDMVAQVLKSSGGFVWACKNYDGDVQSDILAQGFGSLGLMTSVLVCPDGKTIEAEAAHGTVTRHYREHQKGRPTSTNPIASIFAWTRGLEHRGKLDGNQDLIRFAQTLEKVCVQTVESGAMTKDLAGCIHGLSNVKLNEHFLNTTDFLDTIKSNLDRALGKQ.

The transit peptide at 1-39 (MAGYLRAVSSLCRASGSTRTWAPAALNVPSWPEQPRRHY) directs the protein to the mitochondrion. K45, K48, K67, and K69 each carry N6-acetyllysine. K80 and K106 each carry N6-acetyllysine; alternate. An N6-succinyllysine; alternate mark is found at K80 and K106. NADP(+)-binding positions include 115–117 (TIT) and R122. T117 serves as a coordination point for D-threo-isocitrate. Residues 134 to 140 (SPNGTIR) and R149 each bind D-threo-isocitrate. K155 carries the N6-acetyllysine modification. K166 is modified (N6-acetyllysine; alternate). The residue at position 166 (K166) is an N6-succinyllysine; alternate. Position 172 (R172) interacts with D-threo-isocitrate. An N6-acetyllysine; alternate mark is found at K180 and K193. An N6-succinyllysine; alternate mark is found at K180 and K193. The residue at position 199 (K199) is an N6-acetyllysine. Position 256 is an N6-acetyllysine; alternate (K256). K256 carries the N6-succinyllysine; alternate modification. 4 positions are modified to N6-acetyllysine: K263, K272, K275, and K280. K282 carries the N6-acetyllysine; alternate modification. Residue K282 is modified to N6-succinyllysine; alternate. D291 is a binding site for Mn(2+). K299 provides a ligand contact to NADP(+). Residue D314 coordinates Mn(2+). NADP(+)-binding positions include 349-354 (GTVTRH) and N367. An N6-acetyllysine; alternate modification is found at K384. K384 carries the post-translational modification N6-succinyllysine; alternate. An N6-acetyllysine mark is found at K400, K413, and K442.

It belongs to the isocitrate and isopropylmalate dehydrogenases family. As to quaternary structure, homodimer. Mg(2+) is required as a cofactor. It depends on Mn(2+) as a cofactor. Acetylation at Lys-413 dramatically reduces catalytic activity. Deacetylated by SIRT3.

It is found in the mitochondrion. The enzyme catalyses D-threo-isocitrate + NADP(+) = 2-oxoglutarate + CO2 + NADPH. Functionally, plays a role in intermediary metabolism and energy production. It may tightly associate or interact with the pyruvate dehydrogenase complex. The protein is Isocitrate dehydrogenase [NADP], mitochondrial (Idh2) of Rattus norvegicus (Rat).